A 139-amino-acid polypeptide reads, in one-letter code: Cuticle protein 6 (139 aa).

Gln-1 carries the post-translational modification Pyrrolidone carboxylic acid. The Chitin-binding type R&amp;R domain maps to Leu-31–Pro-92.

The polypeptide is Cuticle protein 6 (Blaberus craniifer (Death's head cockroach)).